The primary structure comprises 396 residues: Methylthioribose kinase (396 aa).

ATP-binding positions include Asn-44, Lys-61, and 115–117; that span reads EDL. Residue Asp-233 coordinates substrate. Position 250-252 (250-252) interacts with ATP; the sequence is DPE. Arg-340 provides a ligand contact to substrate.

The protein belongs to the methylthioribose kinase family. Homodimer.

It catalyses the reaction 5-(methylsulfanyl)-D-ribose + ATP = 5-(methylsulfanyl)-alpha-D-ribose 1-phosphate + ADP + H(+). The protein operates within amino-acid biosynthesis; L-methionine biosynthesis via salvage pathway; S-methyl-5-thio-alpha-D-ribose 1-phosphate from S-methyl-5'-thioadenosine (hydrolase route): step 2/2. In terms of biological role, catalyzes the phosphorylation of methylthioribose into methylthioribose-1-phosphate. This Geobacillus kaustophilus (strain HTA426) protein is Methylthioribose kinase.